We begin with the raw amino-acid sequence, 126 residues long: Anti-adapter protein IraD (126 aa).

Belongs to the GpW/Gp25 family. IraD subfamily. As to quaternary structure, interacts with RssB.

The protein localises to the cytoplasm. Inhibits RpoS proteolysis by regulating RssB activity, thereby increasing the stability of the sigma stress factor RpoS during oxidative stress. Its effect on RpoS stability is due to its interaction with RssB, which probably blocks the interaction of RssB with RpoS, and the consequent delivery of the RssB-RpoS complex to the ClpXP protein degradation pathway. This chain is Anti-adapter protein IraD, found in Salmonella choleraesuis (strain SC-B67).